The chain runs to 126 residues: uncharacterized protein (126 aa).

This is an uncharacterized protein from Archaeoglobus fulgidus (strain ATCC 49558 / DSM 4304 / JCM 9628 / NBRC 100126 / VC-16).